Reading from the N-terminus, the 110-residue chain is Large ribosomal subunit protein uL22 (110 aa).

It belongs to the universal ribosomal protein uL22 family. Part of the 50S ribosomal subunit.

Its function is as follows. This protein binds specifically to 23S rRNA; its binding is stimulated by other ribosomal proteins, e.g. L4, L17, and L20. It is important during the early stages of 50S assembly. It makes multiple contacts with different domains of the 23S rRNA in the assembled 50S subunit and ribosome. Functionally, the globular domain of the protein is located near the polypeptide exit tunnel on the outside of the subunit, while an extended beta-hairpin is found that lines the wall of the exit tunnel in the center of the 70S ribosome. This Pseudoalteromonas translucida (strain TAC 125) protein is Large ribosomal subunit protein uL22.